The sequence spans 371 residues: Phospho-N-acetylmuramoyl-pentapeptide-transferase (371 aa).

The next 11 helical transmembrane spans lie at 21-41 (NHIL…DFYY), 46-66 (LTIP…IGIP), 92-112 (PTMG…ILYF), 119-139 (IILT…IDDF), 156-176 (ILLQ…NNLI), 182-202 (IANK…FVLL), 216-236 (GLLS…ILIE), 241-261 (NSTL…FLFL), 268-288 (LFMG…IALI), 296-316 (LIMG…VSIF), and 349-369 (IVSS…IFLI).

Belongs to the glycosyltransferase 4 family. MraY subfamily. Mg(2+) serves as cofactor.

It localises to the cell inner membrane. It catalyses the reaction UDP-N-acetyl-alpha-D-muramoyl-L-alanyl-gamma-D-glutamyl-meso-2,6-diaminopimeloyl-D-alanyl-D-alanine + di-trans,octa-cis-undecaprenyl phosphate = di-trans,octa-cis-undecaprenyl diphospho-N-acetyl-alpha-D-muramoyl-L-alanyl-D-glutamyl-meso-2,6-diaminopimeloyl-D-alanyl-D-alanine + UMP. It functions in the pathway cell wall biogenesis; peptidoglycan biosynthesis. Functionally, catalyzes the initial step of the lipid cycle reactions in the biosynthesis of the cell wall peptidoglycan: transfers peptidoglycan precursor phospho-MurNAc-pentapeptide from UDP-MurNAc-pentapeptide onto the lipid carrier undecaprenyl phosphate, yielding undecaprenyl-pyrophosphoryl-MurNAc-pentapeptide, known as lipid I. The sequence is that of Phospho-N-acetylmuramoyl-pentapeptide-transferase from Prochlorococcus marinus (strain NATL2A).